The sequence spans 77 residues: Large ribosomal subunit protein uL29 (77 aa).

It belongs to the universal ribosomal protein uL29 family.

The polypeptide is Large ribosomal subunit protein uL29 (Corynebacterium jeikeium (strain K411)).